The sequence spans 514 residues: ATP synthase subunit alpha (514 aa).

170–177 (GDRQIGKT) lines the ATP pocket.

It belongs to the ATPase alpha/beta chains family. As to quaternary structure, F-type ATPases have 2 components, CF(1) - the catalytic core - and CF(0) - the membrane proton channel. CF(1) has five subunits: alpha(3), beta(3), gamma(1), delta(1), epsilon(1). CF(0) has three main subunits: a(1), b(2) and c(9-12). The alpha and beta chains form an alternating ring which encloses part of the gamma chain. CF(1) is attached to CF(0) by a central stalk formed by the gamma and epsilon chains, while a peripheral stalk is formed by the delta and b chains.

It localises to the cell inner membrane. The enzyme catalyses ATP + H2O + 4 H(+)(in) = ADP + phosphate + 5 H(+)(out). Produces ATP from ADP in the presence of a proton gradient across the membrane. The alpha chain is a regulatory subunit. This is ATP synthase subunit alpha from Pseudomonas fluorescens (strain SBW25).